A 181-amino-acid chain; its full sequence is tRNA-splicing endonuclease (181 aa).

Residues tyrosine 118, histidine 126, and lysine 157 contribute to the active site.

This sequence belongs to the tRNA-intron endonuclease family. Archaeal short subfamily. As to quaternary structure, homotetramer; although the tetramer contains four active sites, only two participate in the cleavage. Therefore, it should be considered as a dimer of dimers.

It carries out the reaction pretRNA = a 3'-half-tRNA molecule with a 5'-OH end + a 5'-half-tRNA molecule with a 2',3'-cyclic phosphate end + an intron with a 2',3'-cyclic phosphate and a 5'-hydroxyl terminus.. Its function is as follows. Endonuclease that removes tRNA introns. Cleaves pre-tRNA at the 5'- and 3'-splice sites to release the intron. The products are an intron and two tRNA half-molecules bearing 2',3' cyclic phosphate and 5'-OH termini. Recognizes a pseudosymmetric substrate in which 2 bulged loops of 3 bases are separated by a stem of 4 bp. The sequence is that of tRNA-splicing endonuclease from Sulfolobus acidocaldarius (strain ATCC 33909 / DSM 639 / JCM 8929 / NBRC 15157 / NCIMB 11770).